The sequence spans 736 residues: Catalase-peroxidase (736 aa).

The segment at 1–30 (MGGNVMTDDKMNSVTSGANKQETGRDMSNR) is disordered. Residues 12-21 (NSVTSGANKQ) are compositionally biased toward polar residues. The tryptophyl-tyrosyl-methioninium (Trp-Tyr) (with M-250) cross-link spans 101-224 (WHSAGTYRAG…LAAVQMGLIY (124 aa)). Residue His-102 is the Proton acceptor of the active site. Residues 224–250 (YVNPEGPNGNPDPIAAAKDIREVFARM) constitute a cross-link (tryptophyl-tyrosyl-methioninium (Tyr-Met) (with W-101)). His-265 contributes to the heme b binding site. The disordered stretch occupies residues 351–373 (KGGAGAGTIPDAHDPSKRHAPSM).

It belongs to the peroxidase family. Peroxidase/catalase subfamily. In terms of assembly, homodimer or homotetramer. Heme b serves as cofactor. In terms of processing, formation of the three residue Trp-Tyr-Met cross-link is important for the catalase, but not the peroxidase activity of the enzyme.

It carries out the reaction H2O2 + AH2 = A + 2 H2O. It catalyses the reaction 2 H2O2 = O2 + 2 H2O. Functionally, bifunctional enzyme with both catalase and broad-spectrum peroxidase activity. This is Catalase-peroxidase from Methanosarcina acetivorans (strain ATCC 35395 / DSM 2834 / JCM 12185 / C2A).